Consider the following 445-residue polypeptide: Methylthioribose-1-phosphate isomerase (445 aa).

Asp286 (proton donor) is an active-site residue.

Belongs to the eIF-2B alpha/beta/delta subunits family. MtnA subfamily.

The protein resides in the cytoplasm. Its subcellular location is the nucleus. The enzyme catalyses 5-(methylsulfanyl)-alpha-D-ribose 1-phosphate = 5-(methylsulfanyl)-D-ribulose 1-phosphate. It participates in amino-acid biosynthesis; L-methionine biosynthesis via salvage pathway; L-methionine from S-methyl-5-thio-alpha-D-ribose 1-phosphate: step 1/6. Catalyzes the interconversion of methylthioribose-1-phosphate (MTR-1-P) into methylthioribulose-1-phosphate (MTRu-1-P). This Sclerotinia sclerotiorum (strain ATCC 18683 / 1980 / Ss-1) (White mold) protein is Methylthioribose-1-phosphate isomerase (mri1).